We begin with the raw amino-acid sequence, 445 residues long: UPF0210 protein SZO_15840 (445 aa).

The protein belongs to the UPF0210 family. In terms of assembly, homodimer.

In Streptococcus equi subsp. zooepidemicus (strain H70), this protein is UPF0210 protein SZO_15840.